Consider the following 158-residue polypeptide: Cytochrome c2 (158 aa).

Pyrrolidone carboxylic acid is present on glutamine 1. Residues cysteine 18, cysteine 21, histidine 22, and methionine 102 each coordinate heme c. A disordered region spans residues 129 to 158 (AEAAPAADAAAPAAADAAAPAEPAAEGAAT).

The protein belongs to the cytochrome c family. In terms of processing, binds 1 heme c group covalently per subunit.

It is found in the periplasm. Functionally, cytochrome c2 is found mainly in purple, non-sulfur, photosynthetic bacteria where it functions as the electron donor to the oxidized bacteriochlorophyll in the photophosphorylation pathway. However, it may also have a role in the respiratory chain and is found in some non-photosynthetic bacteria. This chain is Cytochrome c2, found in Fuscovulum blasticum (Rhodobacter blasticus).